Here is a 955-residue protein sequence, read N- to C-terminus: 2-oxoglutarate dehydrogenase E1 component (955 aa).

It belongs to the alpha-ketoglutarate dehydrogenase family. As to quaternary structure, homodimer. Part of the 2-oxoglutarate dehydrogenase (OGDH) complex composed of E1 (2-oxoglutarate dehydrogenase), E2 (dihydrolipoamide succinyltransferase) and E3 (dihydrolipoamide dehydrogenase); the complex contains multiple copies of the three enzymatic components (E1, E2 and E3). It depends on thiamine diphosphate as a cofactor.

It catalyses the reaction N(6)-[(R)-lipoyl]-L-lysyl-[protein] + 2-oxoglutarate + H(+) = N(6)-[(R)-S(8)-succinyldihydrolipoyl]-L-lysyl-[protein] + CO2. Its function is as follows. E1 component of the 2-oxoglutarate dehydrogenase (OGDH) complex which catalyzes the decarboxylation of 2-oxoglutarate, the first step in the conversion of 2-oxoglutarate to succinyl-CoA and CO(2). The polypeptide is 2-oxoglutarate dehydrogenase E1 component (Bacillus mycoides (strain KBAB4) (Bacillus weihenstephanensis)).